The following is a 498-amino-acid chain: MNQLEQLTPLTQTQFIAGQWLAGKGPSFSSVNPANGEVIWQGLGADAGQVDAAITSARAAFYTWSAMSLTERLVIVEAFAEQLKEHAELFARTIALETGKALWESRTEVGAMTGKIAISIKANAERTGTVENPMPGAKAFIRHKPHGVVAVFGPYNFPGHLPNGHIVPALIAGNTVLFKPSELTPKVAELTMQLWQQAGLPNGVLNLLQGEIATGKALASHKGIDGLFFTGSSNTGHLLHQQYAGQPGKILALEMGGNNPLIITEVANVDAAVHDIIQSAFISSGQRCTCARRLFIPKTANGDAILAKLLTSTAKIALGDPFAETQPFFGAMISDKAAAGMVKAQADIQAAGGVSLIELTQVTPGLGFVTPGIIDVTDASPLADEEHFGPLLKVYRYTDFDAAIDEANNTSFGLSAGLLADSETDYQHFYRRIRAGIVNWNKPITGASSAAPFGGIGASGNHRASAYYAADYCAYPVSSVEAQAVSLPASLSPGLVIE.

231-236 (GSSNTG) lines the NAD(+) pocket. Catalysis depends on residues E254 and C288.

It belongs to the aldehyde dehydrogenase family. AstD subfamily.

It carries out the reaction N-succinyl-L-glutamate 5-semialdehyde + NAD(+) + H2O = N-succinyl-L-glutamate + NADH + 2 H(+). Its pathway is amino-acid degradation; L-arginine degradation via AST pathway; L-glutamate and succinate from L-arginine: step 4/5. Functionally, catalyzes the NAD-dependent reduction of succinylglutamate semialdehyde into succinylglutamate. The chain is N-succinylglutamate 5-semialdehyde dehydrogenase 1 from Shewanella denitrificans (strain OS217 / ATCC BAA-1090 / DSM 15013).